The primary structure comprises 364 residues: D-alanine--D-alanine ligase (364 aa).

Residues 140 to 346 (KKLALLEGIP…YSQLIDKLIS (207 aa)) enclose the ATP-grasp domain. 173 to 228 (ESEFSYPVFVKPANSGSSVGISKAKDREDLVLAIHEAFLYDTKILIEQAINAREIE) serves as a coordination point for ATP. Mg(2+) contacts are provided by aspartate 299, glutamate 313, and asparagine 315.

It belongs to the D-alanine--D-alanine ligase family. Requires Mg(2+) as cofactor. It depends on Mn(2+) as a cofactor.

The protein resides in the cytoplasm. The enzyme catalyses 2 D-alanine + ATP = D-alanyl-D-alanine + ADP + phosphate + H(+). The protein operates within cell wall biogenesis; peptidoglycan biosynthesis. Functionally, cell wall formation. This Caldicellulosiruptor bescii (strain ATCC BAA-1888 / DSM 6725 / KCTC 15123 / Z-1320) (Anaerocellum thermophilum) protein is D-alanine--D-alanine ligase.